A 648-amino-acid polypeptide reads, in one-letter code: Mitochondrial Rho GTPase 3 (648 aa).

At Met-1 to Ser-621 the chain is on the cytoplasmic side. Position 11 is a phosphoserine (Ser-11). The region spanning Pro-12 to Asp-179 is the Miro 1 domain. 2 consecutive EF-hand domains span residues Arg-195–Thr-230 and Val-316–Ser-351. Ca(2+) is bound by residues Asp-208, Asn-210, Asp-212, Glu-219, Asp-329, Asn-331, Asp-333, Asn-335, and Glu-340. Residues Arg-425 to Asn-599 enclose the Miro 2 domain. A helical membrane pass occupies residues Leu-622–Ala-644. At Arg-645–Ser-648 the chain is on the mitochondrial intermembrane side.

The protein belongs to the mitochondrial Rho GTPase family. As to expression, expressed at very low levels in roots, leaves, stems, flowers and siliques.

Its subcellular location is the mitochondrion outer membrane. Functionally, mitochondrial GTPase that may be involved in mitochondrion development. The polypeptide is Mitochondrial Rho GTPase 3 (Arabidopsis thaliana (Mouse-ear cress)).